The primary structure comprises 1099 residues: Transmembrane protein 132C (1099 aa).

The first 31 residues, 1–31 (MRSEGAAPRRAARYGALSLVLATLLGQVTES), serve as a signal peptide directing secretion. Topologically, residues 32–915 (RGVMDNIQRF…LMQTAHGLSD (884 aa)) are extracellular. N-linked (GlcNAc...) asparagine glycosylation occurs at Asn95. The segment at 237–260 (GDCTGGDTRKDNAIRPGKDGQEGR) is disordered. N-linked (GlcNAc...) asparagine glycosylation is found at Asn314 and Asn371. Residues 801 to 872 (DADSSQTGEK…NNVGKSGRRD (72 aa)) are disordered. A compositionally biased stretch (basic and acidic residues) spans 813–849 (EEIKNHASDRRQKIQDLERPGQDELYHGNFPGDREEG). Residues 916-936 (LEIGMYALLGVFCLAILVFLI) form a helical membrane-spanning segment. Over 937–1099 (NCATFAFKYR…TYLEKFQDSV (163 aa)) the chain is Cytoplasmic. Residues 1002-1045 (NHLLLNGGSQKPTQSQVHRPPGSGGRQTREPRQEPANSPTSKMK) form a disordered region. A compositionally biased stretch (polar residues) spans 1008–1018 (GGSQKPTQSQV).

The protein belongs to the TMEM132 family.

The protein localises to the membrane. The sequence is that of Transmembrane protein 132C (Tmem132c) from Mus musculus (Mouse).